The primary structure comprises 449 residues: Phosphoglucosamine mutase (449 aa).

Ser-104 (phosphoserine intermediate) is an active-site residue. Ser-104, Asp-243, Asp-245, and Asp-247 together coordinate Mg(2+). Ser-104 is modified (phosphoserine).

It belongs to the phosphohexose mutase family. Mg(2+) is required as a cofactor. Post-translationally, activated by phosphorylation.

The catalysed reaction is alpha-D-glucosamine 1-phosphate = D-glucosamine 6-phosphate. Catalyzes the conversion of glucosamine-6-phosphate to glucosamine-1-phosphate. The sequence is that of Phosphoglucosamine mutase from Xanthomonas oryzae pv. oryzae (strain PXO99A).